Consider the following 292-residue polypeptide: Aquaporin-3 (292 aa).

The Cytoplasmic portion of the chain corresponds to 1–24; that stretch reads MGRQKELVSRCGEMLHIRYRLLRQ. Residues 25 to 42 traverse the membrane as a helical segment; that stretch reads ALAECLGTLILVMFGCGS. Residues 43-56 are Extracellular-facing; that stretch reads VAQVVLSRGTHGGF. Residues 57–74 traverse the membrane as a helical segment; it reads LTINLAFGFAVTLGILIA. The Cytoplasmic segment spans residues 75-78; the sequence is GQVS. The discontinuously helical intramembrane region spans 79 to 92; it reads GAHLNPAVTFAMCF. Positions 83–85 match the NPA 1 motif; it reads NPA. Residues 93–100 are Cytoplasmic-facing; the sequence is LAREPWIK. A helical membrane pass occupies residues 101–121; sequence LPIYTLAQTLGAFLGAGIVFG. Over 122–159 the chain is Extracellular; sequence LYYDAIWHFADNQLFVSGPNGTAGIFATYPSGHLDMIN. N-linked (GlcNAc...) asparagine glycosylation is present at Asn141. The helical transmembrane segment at 160-177 threads the bilayer; it reads GFFDQFIGTASLIVCVLA. Residues 178 to 189 lie on the Cytoplasmic side of the membrane; sequence IVDPYNNPVPRG. Residues 190–206 form a helical membrane-spanning segment; that stretch reads LEAFTVGLVVLVIGTSM. Residues 207-210 lie on the Extracellular side of the membrane; sequence GFNS. Positions 211–224 form an intramembrane region, discontinuously helical; it reads GYAVNPARDFGPRL. The NPA 2 signature appears at 215-217; that stretch reads NPA. Topologically, residues 225 to 242 are extracellular; that stretch reads FTALAGWGSAVFTTGQHW. A helical membrane pass occupies residues 243-264; it reads WWVPIVSPLLGSIAGVFVYQLM. At 265-292 the chain is on the cytoplasmic side; sequence IGCHLEQPPPSNEEENVKLAHVKHKEQI.

It belongs to the MIP/aquaporin (TC 1.A.8) family. As to quaternary structure, homotetramer; each monomer provides an independent glycerol/water pore. Could also exist in other oligomeric states. As to expression, widely expressed in epithelial cells of kidney (collecting ducts) and airways, in keratinocytes, immature dendritic cells and erythrocytes. Isoform 2 is not detectable in erythrocytes at the protein level.

The protein localises to the cell membrane. It is found in the basolateral cell membrane. It catalyses the reaction glycerol(in) = glycerol(out). It carries out the reaction H2O(in) = H2O(out). The catalysed reaction is H2O2(out) = H2O2(in). The enzyme catalyses urea(in) = urea(out). With respect to regulation, glycerol transport is regulated by pH, with the porin being permeable to glycerol at pH 7.4 but not at pH 5.5. Water permeability, however, is not influenced by pH. Aquaglyceroporins form homotetrameric transmembrane channels, with each monomer independently mediating glycerol and water transport across the plasma membrane along their osmotic gradient. Could also be permeable to urea. Also participates in cell permeability to H2O2 and H2O2-mediated signaling. In skin, transports glycerol to the epidermis and stratum corneum, where it maintains hydration, elasticity, and supports lipid biosynthesis for barrier repair. In kidney, contributes to the reabsorption of water, helping the body maintain proper fluid balance. The sequence is that of Aquaporin-3 from Homo sapiens (Human).